Reading from the N-terminus, the 531-residue chain is NADH-quinone oxidoreductase subunit N (531 aa).

A run of 14 helical transmembrane segments spans residues 8-28 (VEYF…AGVL), 41-61 (AQVT…IVVA), 81-101 (ATLF…VFMA), 146-166 (GATQ…MMVF), 172-192 (LLTM…MCGL), 208-228 (FLLG…LYGA), 250-270 (ALAG…AVPF), 282-302 (PTPI…GALL), 318-338 (PVLW…AVNQ), 350-370 (VAHV…GLSA), 372-392 (LFYL…VGLV), 418-438 (IVGV…LTSG), 453-473 (GAVP…YFYV), and 500-520 (AAIA…QPVL).

The protein belongs to the complex I subunit 2 family. As to quaternary structure, NDH-1 is composed of 14 different subunits. Subunits NuoA, H, J, K, L, M, N constitute the membrane sector of the complex.

It is found in the cell membrane. The enzyme catalyses a quinone + NADH + 5 H(+)(in) = a quinol + NAD(+) + 4 H(+)(out). In terms of biological role, NDH-1 shuttles electrons from NADH, via FMN and iron-sulfur (Fe-S) centers, to quinones in the respiratory chain. The immediate electron acceptor for the enzyme in this species is believed to be a menaquinone. Couples the redox reaction to proton translocation (for every two electrons transferred, four hydrogen ions are translocated across the cytoplasmic membrane), and thus conserves the redox energy in a proton gradient. The protein is NADH-quinone oxidoreductase subunit N of Mycobacterium bovis (strain ATCC BAA-935 / AF2122/97).